The following is a 549-amino-acid chain: Probable protein kinase UbiB (549 aa).

The 379-residue stretch at 123–501 (DFNETPLASA…QQQAHKSNYL (379 aa)) folds into the Protein kinase domain. ATP is bound by residues 129 to 137 (LASASISQV) and Lys-152. Asp-287 acts as the Proton acceptor in catalysis. Transmembrane regions (helical) follow at residues 498-518 (SNYLLITSAILLICGTLLFNQ) and 520-540 (ATLWSPYVCLISGAALWIIGW).

Belongs to the ABC1 family. UbiB subfamily.

The protein localises to the cell inner membrane. It functions in the pathway cofactor biosynthesis; ubiquinone biosynthesis [regulation]. Its function is as follows. Is probably a protein kinase regulator of UbiI activity which is involved in aerobic coenzyme Q (ubiquinone) biosynthesis. This chain is Probable protein kinase UbiB, found in Shewanella sp. (strain MR-7).